Consider the following 732-residue polypeptide: Polyribonucleotide nucleotidyltransferase (732 aa).

Residues Asp483 and Asp489 each coordinate Mg(2+). The 60-residue stretch at 550–609 folds into the KH domain; it reads PRIVTVQIPVDKIGELIGPKGKNIRGIQDETGAELSVEDDGTVTIAAVGGDSMERAKQMV. The S1 motif domain occupies 619 to 687; sequence GETYEGTVKT…ERGRLRLSMK (69 aa). Residues 684-732 form a disordered region; sequence LSMKALLPKPEGMPDEPPQSERPRRDDGERSGGDRGGRGGRNGGGRDRR. Basic and acidic residues predominate over residues 702-720; it reads QSERPRRDDGERSGGDRGG.

This sequence belongs to the polyribonucleotide nucleotidyltransferase family. Requires Mg(2+) as cofactor.

The protein localises to the cytoplasm. It carries out the reaction RNA(n+1) + phosphate = RNA(n) + a ribonucleoside 5'-diphosphate. Functionally, involved in mRNA degradation. Catalyzes the phosphorolysis of single-stranded polyribonucleotides processively in the 3'- to 5'-direction. In Gemmatimonas aurantiaca (strain DSM 14586 / JCM 11422 / NBRC 100505 / T-27), this protein is Polyribonucleotide nucleotidyltransferase.